Consider the following 97-residue polypeptide: Co-chaperonin GroES (97 aa).

It belongs to the GroES chaperonin family. In terms of assembly, heptamer of 7 subunits arranged in a ring. Interacts with the chaperonin GroEL.

Its subcellular location is the cytoplasm. In terms of biological role, together with the chaperonin GroEL, plays an essential role in assisting protein folding. The GroEL-GroES system forms a nano-cage that allows encapsulation of the non-native substrate proteins and provides a physical environment optimized to promote and accelerate protein folding. GroES binds to the apical surface of the GroEL ring, thereby capping the opening of the GroEL channel. The polypeptide is Co-chaperonin GroES (Pseudomonas putida (strain ATCC 700007 / DSM 6899 / JCM 31910 / BCRC 17059 / LMG 24140 / F1)).